The primary structure comprises 273 residues: Probable membrane transporter protein YunE (273 aa).

Helical transmembrane passes span Phe3–Gly23, Ala50–Ile70, Leu81–Phe101, Ser105–Ala125, Val157–Gly177, Met185–Leu205, Trp222–Ile242, and Ile251–Ile271.

This sequence belongs to the 4-toluene sulfonate uptake permease (TSUP) (TC 2.A.102) family.

It localises to the cell membrane. This Bacillus subtilis (strain 168) protein is Probable membrane transporter protein YunE (yunE).